The primary structure comprises 291 residues: Elongation factor Ts (291 aa).

The segment at 80 to 83 (TDFV) is involved in Mg(2+) ion dislocation from EF-Tu.

The protein belongs to the EF-Ts family.

Its subcellular location is the cytoplasm. In terms of biological role, associates with the EF-Tu.GDP complex and induces the exchange of GDP to GTP. It remains bound to the aminoacyl-tRNA.EF-Tu.GTP complex up to the GTP hydrolysis stage on the ribosome. This Limosilactobacillus reuteri (strain DSM 20016) (Lactobacillus reuteri) protein is Elongation factor Ts.